The following is a 307-amino-acid chain: Putative F-box protein PP2-B6 (307 aa).

An F-box domain is found at 42 to 88 (HSPFDDLPEDCISNIISFTSPRDVCVSASVSKSFAHAVQCDSIWEKF).

This chain is Putative F-box protein PP2-B6 (PP2B6), found in Arabidopsis thaliana (Mouse-ear cress).